The chain runs to 188 residues: uncharacterized protein (188 aa).

Residues threonine 136–tryptophan 156 traverse the membrane as a helical segment.

It is found in the host membrane. This is an uncharacterized protein from Magallana gigas (Pacific oyster).